The sequence spans 234 residues: Demethylmenaquinone methyltransferase (234 aa).

S-adenosyl-L-methionine contacts are provided by residues Thr-58, Asp-79, and Asn-106–Ala-107.

The protein belongs to the class I-like SAM-binding methyltransferase superfamily. MenG/UbiE family.

It carries out the reaction a 2-demethylmenaquinol + S-adenosyl-L-methionine = a menaquinol + S-adenosyl-L-homocysteine + H(+). The protein operates within quinol/quinone metabolism; menaquinone biosynthesis; menaquinol from 1,4-dihydroxy-2-naphthoate: step 2/2. Functionally, methyltransferase required for the conversion of demethylmenaquinol (DMKH2) to menaquinol (MKH2). The polypeptide is Demethylmenaquinone methyltransferase (Geobacillus kaustophilus (strain HTA426)).